The primary structure comprises 436 residues: GTPase Der (436 aa).

EngA-type G domains lie at 4–167 (PTVA…PVEE) and 175–351 (IRFS…ESQN). Residues 10-17 (GRPNVGKS), 57-61 (DTGGI), 119-122 (NKVD), 181-188 (GRPNVGKS), 229-233 (DTAGM), and 294-297 (NKWD) each bind GTP. A KH-like domain is found at 352–436 (KRIPSAVLND…PIHLIARKRK (85 aa)).

Belongs to the TRAFAC class TrmE-Era-EngA-EngB-Septin-like GTPase superfamily. EngA (Der) GTPase family. In terms of assembly, associates with the 50S ribosomal subunit.

Its function is as follows. GTPase that plays an essential role in the late steps of ribosome biogenesis. The protein is GTPase Der of Streptococcus uberis (strain ATCC BAA-854 / 0140J).